Consider the following 1296-residue polypeptide: Capping protein, Arp2/3 and myosin-I linker protein 2 (1296 aa).

LRR repeat units lie at residues 63-87 (DCTF…TFEL), 88-110 (ESLP…AQHV), 248-271 (ELVL…LAGH), 273-296 (NSGL…ALGR), 305-328 (DSTL…DSGG), 363-386 (CSSL…AAPA), 395-415 (TRML…ALRA), 426-448 (IHDL…VIQD), 453-477 (AGAL…VLAI), 480-506 (SRSL…VLHR), 515-538 (DCPL…LIRA), 542-565 (NPKL…MLAK), 570-594 (NTRL…VAQA), 598-621 (NHSL…RPEL), and 836-859 (TMAP…GLEE). Positions 507–601 (IAQLMQDDDC…AQALEQNHSL (95 aa)) are tropomodulin-like. The tract at residues 975 to 1002 (ATPVPRTLRKKLGTLFAFKKPRSTRGPR) is necessary for localization at the cell membrane. Positions 988–1296 (TLFAFKKPRS…TDQRGGGPNP (309 aa)) are disordered. Phosphoserine is present on Ser-1008. Basic and acidic residues-rich tracts occupy residues 1079 to 1091 (RPDK…RGDT) and 1118 to 1134 (ESKR…KAGS). Ser-1134 is modified (phosphoserine). Thr-1145 bears the Phosphothreonine mark. Residues 1176–1185 (TWKTLGQQLN) are compositionally biased toward polar residues. Arg-1191 carries the omega-N-methylarginine modification. Composition is skewed to pro residues over residues 1199 to 1209 (PGPPSPCPSPS) and 1267 to 1285 (PLPP…PPSP). A phosphoserine mark is found at Ser-1203 and Ser-1281.

This sequence belongs to the CARMIL family. As to quaternary structure, forms homodimers. Interacts (via C-terminus) with heterodimeric capping protein (CP); the interaction inhibits CP activity and hence promotes actin polymerization at the barbed end of actin filaments.

It localises to the cytoplasm. It is found in the cytoskeleton. Its subcellular location is the cell membrane. The protein localises to the cell projection. The protein resides in the lamellipodium. It localises to the ruffle. Cell membrane-cytoskeleton-associated protein that plays a role in the regulation of actin polymerization at the barbed end of actin filaments. Prevents F-actin heterodimeric capping protein (CP) activity at the leading edges of migrating cells, and hence generates uncapped barbed ends and enhances actin polymerization. Plays a role in cell protrusion formations; involved in cell polarity, lamellipodial assembly, membrane ruffling and macropinosome formations. Involved as well in cell migration and invadopodia formation during wound healing. Required for CD28-mediated stimulation of NF-kappa-B signaling, involved in naive T cells activation, maturation into T memory cells, and differentiation into T helper cells. Required for CD28-mediated differentiation of T regulatory cells. This chain is Capping protein, Arp2/3 and myosin-I linker protein 2, found in Mus musculus (Mouse).